The chain runs to 577 residues: MLPVLRSGLRRAVWRCGHGLLQRRIAAGAGWYARACASDDAASRSPLKQEMLNSTEYLHVQNILLQKNQQRMTKQKLLSEATGFYDRFKINTKWLLIRGNRPFSGEEISTLLSWLILSQVLWVILGTTTFVSLLLFLANTVLAKEMVGKFVGNSLNRYMDGVDVQFQDAMVPEWRKGQISFQKVRLRTTPGAQDAGLLTFDLMFSKLSLTLSVRKWLQGRGLINDVYVSGMKGDVSVGAAERKDAKLIDFFSNPNYELGEVEVCDSVIMCTDQEIGQKFRVSIYNMRMSQLRFRWSLLDLFNADVVSGALNHSLFSIHKRQHKLPLHEMEKDMAPWKRISRLRLNPISVKDLGLDKSNAFNWIEGGSVEMIADLMLPNIYPESAAAEDENKYVVMDLRITFKDLIASMNTVPPALSNGRELISFDELKPIIMFVNNRRGLFSSLRNLDNNKLWRPTVTIERQQSYPDTTVIPMRTFQWPEGEGSVQLNQEIIKYHENPSDNSNEIILRCRIAKHMNELQNTFLFKETDVYDKMALELYTDLMKMIEETEYKKKNDWVKLLGTTFASQLLIFGLGAMV.

A mitochondrion-targeting transit peptide spans 1–11 (MLPVLRSGLRR). At 12 to 115 (AVWRCGHGLL…EEISTLLSWL (104 aa)) the chain is on the mitochondrial matrix side. Residues 116 to 136 (ILSQVLWVILGTTTFVSLLLF) traverse the membrane as a helical segment. Over 137–556 (LANTVLAKEM…ETEYKKKNDW (420 aa)) the chain is Mitochondrial intermembrane. The helical transmembrane segment at 557 to 577 (VKLLGTTFASQLLIFGLGAMV) threads the bilayer.

It belongs to the MDM31/MDM32 family.

Its subcellular location is the mitochondrion inner membrane. In terms of biological role, involved in the organization of the mitochondrial membranes and the global structure of the mitochondria. Also required for mitochondrial distribution and mobility as well as for the maintenance of mitochondrial DNA nucleoids structures. The chain is Mitochondrial distribution and morphology protein 32 (MDM32) from Eremothecium gossypii (strain ATCC 10895 / CBS 109.51 / FGSC 9923 / NRRL Y-1056) (Yeast).